We begin with the raw amino-acid sequence, 157 residues long: Galactose-specific lectin (157 aa).

The region spanning 12–157 (SIVVGTWGAE…LDYIGFHLAL (146 aa)) is the Jacalin-type lectin domain. The N-linked (GlcNAc...) asparagine glycan is linked to Asn-45.

Belongs to the jacalin lectin family. Tetramer of heterodimers of light and heavy chains which are non-covalently linked. Post-translationally, N-linked carbohydrates at Asn-45 can be of complex or paucimannose type.

Alpha-D-galactose-specific lectin. Has hemagglutinating activity towards human and rabbit erythrocytes. Is highly cytotoxic to human cells in vitro. This chain is Galactose-specific lectin, found in Morus indica (Mulberry).